We begin with the raw amino-acid sequence, 203 residues long: Superoxide dismutase [Mn] (203 aa).

Positions 27, 81, 164, and 168 each coordinate Mn(2+).

The protein belongs to the iron/manganese superoxide dismutase family. In terms of assembly, homodimer. Requires Mn(2+) as cofactor.

It carries out the reaction 2 superoxide + 2 H(+) = H2O2 + O2. Its function is as follows. Destroys superoxide anion radicals which are normally produced within the cells and which are toxic to biological systems. Partially complements double sodA-sodB deletions in E.coli. The protein is Superoxide dismutase [Mn] of Pseudomonas aeruginosa (strain ATCC 15692 / DSM 22644 / CIP 104116 / JCM 14847 / LMG 12228 / 1C / PRS 101 / PAO1).